A 471-amino-acid polypeptide reads, in one-letter code: Cell division protein FtsP (471 aa).

Positions 1 to 27 (MSLNRRQFIQASGLALCAGMTPLAAKA) form a signal peptide, tat-type signal. One can recognise a Plastocyanin-like domain in the interval 229–287 (VRLRLLNASNSRRYVMRLSDGRAMNVIASDQGLLPAPMAVNQLSLAPGERREILIDMSQ).

The protein belongs to the FtsP family. Predicted to be exported by the Tat system. The position of the signal peptide cleavage has not been experimentally proven.

The protein localises to the periplasm. Cell division protein that is required for growth during stress conditions. May be involved in protecting or stabilizing the divisomal assembly under conditions of stress. This chain is Cell division protein FtsP, found in Pectobacterium atrosepticum (strain SCRI 1043 / ATCC BAA-672) (Erwinia carotovora subsp. atroseptica).